The primary structure comprises 50 residues: uncharacterized protein (50 aa).

This is an uncharacterized protein from Sinorhizobium fredii (strain NBRC 101917 / NGR234).